We begin with the raw amino-acid sequence, 207 residues long: Small ribosomal subunit protein uS4 (207 aa).

Residues 22-54 (KSARRSISDKSKFESKPGQHGRTSGSRTSDFGL) form a disordered region. Positions 27–38 (SISDKSKFESKP) are enriched in basic and acidic residues. Residues 42 to 52 (GRTSGSRTSDF) are compositionally biased toward polar residues. The region spanning 97–157 (SRLDNVVYRM…EKSKKQLRII (61 aa)) is the S4 RNA-binding domain.

This sequence belongs to the universal ribosomal protein uS4 family. In terms of assembly, part of the 30S ribosomal subunit. Contacts protein S5. The interaction surface between S4 and S5 is involved in control of translational fidelity.

One of the primary rRNA binding proteins, it binds directly to 16S rRNA where it nucleates assembly of the body of the 30S subunit. Its function is as follows. With S5 and S12 plays an important role in translational accuracy. The protein is Small ribosomal subunit protein uS4 of Leptothrix cholodnii (strain ATCC 51168 / LMG 8142 / SP-6) (Leptothrix discophora (strain SP-6)).